A 387-amino-acid polypeptide reads, in one-letter code: 3-hydroxy-D-aspartate aldolase (387 aa).

Lys62 carries the N6-(pyridoxal phosphate)lysine modification. Pyridoxal 5'-phosphate contacts are provided by residues Gln85, Thr238, 256-257 (GS), and Tyr265. Mg(2+) contacts are provided by His355 and Asp357.

Belongs to the DSD1 family. In terms of assembly, homodimer. Requires pyridoxal 5'-phosphate as cofactor. Mg(2+) serves as cofactor.

It catalyses the reaction (3S)-3-hydroxy-D-aspartate = glyoxylate + glycine. The catalysed reaction is (3R)-3-hydroxy-D-aspartate = glyoxylate + glycine. Its function is as follows. Catalyzes the condensation of glyoxylate and glycine into (2R,3S)-beta-hydroxyaspartate ((3S)-3-hydroxy-D-aspartate). Is essential for the growth of P.denitrificans in the presence of glycolate and glyoxylate since it functions in glyoxylate assimilation via the beta-hydroxyaspartate cycle (BHAC). Is also able to catalyze the reverse reaction in vitro, i.e. the cleavage of (3S)-3-hydroxy-D-aspartate, and that of D-threonine to a lesser extent. The protein is 3-hydroxy-D-aspartate aldolase of Paracoccus denitrificans (strain Pd 1222).